The chain runs to 496 residues: Cytochrome P450 71D18 (496 aa).

A helical; Signal-anchor for type II membrane protein membrane pass occupies residues 2–22; sequence ELDLLSAIIILVATYIVSLLI. Cysteine 436 provides a ligand contact to heme.

Belongs to the cytochrome P450 family. Heme serves as cofactor.

The protein resides in the endoplasmic reticulum membrane. It carries out the reaction (4S)-limonene + reduced [NADPH--hemoprotein reductase] + O2 = (1S,5R)-carveol + oxidized [NADPH--hemoprotein reductase] + H2O + H(+). Hydroxylates (-)-(4S)-limonene to (-)-trans-carveol, a precursor of (-)-carvone. Fluorinated substrate analogs are hydroxylated with the same regio- and stereochemistry. This Mentha gracilis (Gingermint) protein is Cytochrome P450 71D18 (CYP71D18).